Here is a 128-residue protein sequence, read N- to C-terminus: Sm-like protein LSM1A (128 aa).

Residues 10 to 85 (FFSTSLAAYL…VVLIGELDVE (76 aa)) enclose the Sm domain.

This sequence belongs to the snRNP Sm proteins family. In terms of assembly, component of the heptameric LSM1-LSM7 complex that forms a seven-membered ring structure with a donut shape. The LSM subunits are arranged in the order LSM1, LSM2, LSM3, LSM6, LSM5, LSM7 and LSM4. LSM1A subunit interacts only with its two neighboring subunits, LSM2 and LSM4. In terms of tissue distribution, expressed in roots, leaves, stems, flowers and siliques.

It is found in the cytoplasm. The protein resides in the P-body. Functionally, component of the cytoplasmic LSM1-LSM7 complex which is involved in mRNA degradation by promoting decapping and leading to accurate 5'-3' mRNA decay. LSM1A and LSM1B are essential for the formation of the cytoplasmic LSM1-LSM7 complex which regulates developmental gene expression by the decapping of specific development-related transcripts. Required for P-body formation during heat stress. This is Sm-like protein LSM1A from Arabidopsis thaliana (Mouse-ear cress).